The chain runs to 874 residues: MYQTTAALRSAFLEFFRRNGHQVVDSSSLVPGNDPTLLFTNAGMNQFKDVFLGEDKRDYSRATTAQRCVRAGGKHNDLDNVGYTARHHTFFEMLGNFSFGDYFKQDAIRFAWTFLTEELKLPKERLCVTVYETDDEAFEIWNKEIGVAAENIIRIGDNKGAAYASDNFWQMGDTGPCGPCTEIFYDHGEHIWGGRPGTPEEDGDRFIEIWNIVFMQYNRQADGTMDPLPKPSVDTGMGIERIAAIMQGVHSNYEIDIFQSLIKKTAEILGVTDLENKSLRVVADHIRSCAFLVADGVMPSNEGRGYVLRRIIRRAVRHGNKLGATEAFFYKLVPTLIEVMGDAAKELVATQAIVEKALKAEEEQFARTLERGLGILDNALSQLEGKELDGETAFKLYDTYGFPVDLTADVCRERDITVDEAGFEAAMAEQRSRAQAAGQFDTDYNDSLKIDAETEFCGYSDLNGEAKVIGLYVDGQAVDALAEGDQGVVVLDSTPFYGESGGQCGDKGLLSAEGVEFEVKDTQKYGQAMGHIGLVKAGSIAMGQTLNAAVDKKLRHRTELNHSVTHLLHAALRQVLGTHVSQKGSLVEPERLRFDFSHFEAVKREELKQVEDLVNTQIRRNHELKAEVMDIDQAKEKGAMALFGEKYDSQVRVVTMGDFSIELCGGTHVGRTGDIGLFKITSEGGIAAGIRRIEAVTGAAAIAYVGEQQAQLEQAASLLKGDSASVVAKLKAQLDKTKQLEKELSQLKDKLAAATSADLAGEAQELAGVKVLVKLLEGVEAGALRGLQDELKQKLQSGIVVLGIAGDAKVNLIAGVTKDLTGKVKAGELVAMVAAQVGGKGGGRPDMAQAGGSEPEKLAGALDSVIPWLSERLA.

The Zn(2+) site is built by His562, His566, Cys664, and His668.

Belongs to the class-II aminoacyl-tRNA synthetase family. It depends on Zn(2+) as a cofactor.

It is found in the cytoplasm. It carries out the reaction tRNA(Ala) + L-alanine + ATP = L-alanyl-tRNA(Ala) + AMP + diphosphate. Functionally, catalyzes the attachment of alanine to tRNA(Ala) in a two-step reaction: alanine is first activated by ATP to form Ala-AMP and then transferred to the acceptor end of tRNA(Ala). Also edits incorrectly charged Ser-tRNA(Ala) and Gly-tRNA(Ala) via its editing domain. The polypeptide is Alanine--tRNA ligase (Shewanella loihica (strain ATCC BAA-1088 / PV-4)).